The sequence spans 201 residues: Ras-related protein Rab-35 (201 aa).

Glycine 18, valine 19, glycine 20, lysine 21, serine 22, serine 23, serine 34, glycine 35, tyrosine 37, threonine 39, and threonine 40 together coordinate GTP. Serine 22 lines the Mg(2+) pocket. The Switch 1 motif lies at aspartate 30–glycine 42. Mg(2+) contacts are provided by threonine 40 and aspartate 63. The short motif at threonine 64 to glycine 80 is the Switch 2 element. Glycine 66 provides a ligand contact to GTP. The residue at position 72 (threonine 72) is a Phosphothreonine; by LRRK2. Serine 75 is subject to O-(2-cholinephosphoryl)serine. Position 77 is an O-AMP-tyrosine (tyrosine 77). GTP contacts are provided by asparagine 120, lysine 121, aspartate 123, alanine 151, and lysine 152. Residues cysteine 200 and cysteine 201 are each lipidated (S-geranylgeranyl cysteine).

It belongs to the small GTPase superfamily. Rab family. In terms of assembly, interacts with DENND1A and DENND1B; in a nucleotide-dependent manner. Interacts with DENND1C; weak interaction which is nucleotide-independent. Interacts (GTP-bound form) with ACAP2, RUSC2, OCRL MICAL1 and MICALL1; the interaction is direct and probably recruits these effectors to membranes. Interacts with EHD1; the interaction is indirect through MICALL1 and probably recruits EHD1 to membranes. Interacts with GDI1, GDI2, CHM and CHML; phosphorylation at Thr-72 by LRRK2 disrupts these interactions. It depends on Mg(2+) as a cofactor. In terms of processing, phosphorylation at Thr-72 by LRRK2 prevents the association of regulatory proteins including CHM, CHML and GDP dissociation inhibitors GDI1 and GDI2. Post-translationally, AMPylation at Tyr-77 by L.pneumophila DrrA occurs in the switch 2 region and leads to moderate inactivation of the GTPase activity. It appears to prolong the lifetime of the GTP state of RAB1B by restricting access of GTPase effectors to switch 2 and blocking effector-stimulated GTP hydrolysis, thereby rendering RAB35 constitutively active. Phosphocholinated by L.pneumophila AnkX. Both GDP-bound and GTP-bound forms can be phosphocholinated. Phosphocholination inhibits the GEF activity of DENND1A.

The protein resides in the cell membrane. It localises to the membrane. It is found in the clathrin-coated pit. The protein localises to the cytoplasmic vesicle. Its subcellular location is the clathrin-coated vesicle. The protein resides in the endosome. It localises to the melanosome. The enzyme catalyses GTP + H2O = GDP + phosphate + H(+). Regulated by guanine nucleotide exchange factors (GEFs) including DENND1A, DENND1B and DENND1C which promote the exchange of bound GDP for free GTP. Regulated by GTPase activating proteins (GAPs) including TBC1D10 and TBC1D13 which increase GTP hydrolysis activity. Inhibited by GDP dissociation inhibitors (GDIs) which prevent Rab-GDP dissociation. Its function is as follows. The small GTPases Rab are key regulators of intracellular membrane trafficking, from the formation of transport vesicles to their fusion with membranes. Rabs cycle between an inactive GDP-bound form and an active GTP-bound form that is able to recruit to membranes different sets of downstream effectors directly responsible for vesicle formation, movement, tethering and fusion. RAB35 is involved in the process of endocytosis and is an essential rate-limiting regulator of the fast recycling pathway back to the plasma membrane. During cytokinesis, required for the postfurrowing terminal steps, namely for intercellular bridge stability and abscission, possibly by controlling phosphatidylinositol 4,5-bis phosphate (PIP2) and SEPT2 localization at the intercellular bridge. May indirectly regulate neurite outgrowth. Together with TBC1D13 may be involved in regulation of insulin-induced glucose transporter SLC2A4/GLUT4 translocation to the plasma membrane in adipocytes. This chain is Ras-related protein Rab-35, found in Homo sapiens (Human).